The following is a 169-amino-acid chain: Putative pre-16S rRNA nuclease (169 aa).

Residues 1–19 (MTDSDHRLPDRPGEGDPGR) are compositionally biased toward basic and acidic residues. Residues 1–22 (MTDSDHRLPDRPGEGDPGRGRR) form a disordered region.

This sequence belongs to the YqgF nuclease family.

Its subcellular location is the cytoplasm. Its function is as follows. Could be a nuclease involved in processing of the 5'-end of pre-16S rRNA. This is Putative pre-16S rRNA nuclease from Mycobacterium sp. (strain JLS).